The following is a 671-amino-acid chain: Acetyl-coenzyme A synthetase 2 (671 aa).

CoA-binding positions include 207–210 (RGGR) and Thr326. ATP-binding positions include 402-404 (GEP), 426-431 (DTYWQT), Asp517, and Arg532. Ser540 lines the CoA pocket. ATP is bound at residue Arg543. Arg603 lines the CoA pocket.

The protein belongs to the ATP-dependent AMP-binding enzyme family.

The enzyme catalyses acetate + ATP + CoA = acetyl-CoA + AMP + diphosphate. This is Acetyl-coenzyme A synthetase 2 (ACS2) from Candida albicans (strain SC5314 / ATCC MYA-2876) (Yeast).